The primary structure comprises 703 residues: Cyclic AMP-dependent transcription factor ATF-6 beta (703 aa).

A2 is modified (N-acetylalanine). Residues 2–86 (AELMLLSEIA…ELLPIFPDLQ (85 aa)) form a transcription activation region. The Cytoplasmic segment spans residues 2–396 (AELMLLSEIA…ELKLGSGNRK (395 aa)). 3 disordered regions span residues 87 to 114 (VKSE…PSSE), 229 to 248 (LDGS…QPKP), and 293 to 317 (EGPA…GNSC). Over residues 89–114 (SEPSSPCSSSSLSSESSRLSTEPSSE) the composition is skewed to low complexity. Residues 325–388 (LLKRQQRMIK…EALLAENSEL (64 aa)) form the bZIP domain. The interval 327–347 (KRQQRMIKNRESACQSRRKKK) is basic motif. Residues 350–357 (LQGLEARL) are leucine-zipper. Residues 397–417 (VVCIMVFLLFIAFNFGPVSIS) traverse the membrane as a helical; Signal-anchor for type II membrane protein segment. Over 418–703 (EPPSAPISPR…SHQPLYLNHP (286 aa)) the chain is Lumenal. The disordered stretch occupies residues 447–479 (PVQGVEPLQGSSQGPKEPQPSPTDQPSFSNLTA). 2 N-linked (GlcNAc...) asparagine glycosylation sites follow: N476 and N505. The interval 521–565 (QRHQRGRRKIPQRAQERQKSQPRKKSPPVKAVPIQPPGPPERDSV) is disordered. Residues 522–531 (RHQRGRRKIP) show a composition bias toward basic residues. N-linked (GlcNAc...) asparagine glycosylation is found at N610, N627, and N676. Residues 660–676 (STVPPSLRKQPSPTPGN) show a composition bias toward polar residues. The tract at residues 660 to 703 (STVPPSLRKQPSPTPGNATGGPLPVSAASQAHQASHQPLYLNHP) is disordered. The span at 685 to 696 (SAASQAHQASHQ) shows a compositional bias: low complexity.

It belongs to the bZIP family. ATF subfamily. Homodimer and heterodimer with ATF6-alpha. The dimer interacts with the nuclear transcription factor Y (NF-Y) trimer through direct binding to NF-Y subunit C (NF-YC). Post-translationally, N-glycosylated. During unfolded protein response, a fragment of approximately 60 kDa containing the cytoplasmic transcription factor domain is released by proteolysis. The cleavage is probably performed sequentially by site-1 (MBTPS1, S1P) and site-2 (MBTPS2, S2P) proteases. As to expression, ubiquitous.

The protein resides in the endoplasmic reticulum membrane. Its subcellular location is the nucleus. Functionally, precursor of the transcription factor form (Processed cyclic AMP-dependent transcription factor ATF-6 beta), which is embedded in the endoplasmic reticulum membrane. Endoplasmic reticulum stress promotes processing of this form, releasing the transcription factor form that translocates into the nucleus, where it activates transcription of genes involved in the unfolded protein response (UPR). In terms of biological role, transcription factor that acts in the unfolded protein response (UPR) pathway by activating UPR target genes induced during ER stress. Binds DNA on the 5'-CCAC[GA]-3' half of the ER stress response element (ERSE) (5'-CCAATN(9)CCAC[GA]-3') when NF-Y is bound to ERSE. This chain is Cyclic AMP-dependent transcription factor ATF-6 beta (ATF6B), found in Homo sapiens (Human).